The following is a 385-amino-acid chain: Zinc finger protein B385R (385 aa).

A C2H2-type zinc finger spans residues 166-190 (LQCPNCGCIQELMGTIFDETHFYNH).

It belongs to the asfivirus B385R family.

This chain is Zinc finger protein B385R, found in Ornithodoros (relapsing fever ticks).